Here is a 723-residue protein sequence, read N- to C-terminus: Preterminal protein (723 aa).

The Nuclear localization signal signature appears at 453–462; the sequence is RLPMRRRRRR. Residues 457-492 form a disordered region; the sequence is RRRRRRAPPPPPMSEELSEPEVEAFPPASPPRRSFE. At serine 651 the chain carries O-(5'-phospho-DNA)-serine.

This sequence belongs to the adenoviridae terminal protein family. As to quaternary structure, heterodimer with the polymerase; this heterodimer binds to bp 9 to 18 of the genome. Interacts with host POU2F1; POU2F1 binds to the auxiliary sequences in the inverted terminal repeats and tethers the pTP-POL heterodimer to the origin DNA thereby participating in the assembly of the pre-initiation complex (POL-TP-DBP-NFIA-POU2F1). In terms of processing, preterminal protein is used to replicate viral genome, upon genomic encapsidation it is processed first into iTP and finally into TP by adenovirus protease.

The protein localises to the host nucleus matrix. Functionally, protein covalently bound to the viral DNA that acts as a primer for viral genomic replication by DNA strand displacement. Assembles on the viral origin of replication in an initiation complex with viral polymerase, DBP, host NFIA and host POU2F1/OCT1. During initiation, the polymerase covalently couples the first dCTP with Ser-580 of pTP. The terminal protein stimulates the template activity over 20 fold compared to protein-free templates. Neo-synthesized viral genomes are linked to two preterminal proteins, one for each 5' end. These new genomes are encapsidated in the nucleus, and during capsid maturation by viral protease, preterminal protein is first cleaved into intermediary (iTP), then into mature TP. May play a role in host nuclear matrix localization of genomic DNA. In Canis lupus familiaris (Dog), this protein is Preterminal protein.